Reading from the N-terminus, the 1372-residue chain is Collagen alpha-2(I) chain (1372 aa).

The signal sequence occupies residues 1–22 (MLSFVDTRTLLLLAVTSCLATC). Residue Gln-23 is modified to Pyrrolidone carboxylic acid. A propeptide spans 23 to 85 (QSLQMGSVRK…PPGLTGNFAA (63 aa)) (N-terminal propeptide). The disordered stretch occupies residues 28-1135 (GSVRKGPTGD…DQPRSQPSLR (1108 aa)). Over residues 59–77 (VGPPGPPGAPGPPGPPGPP) the composition is skewed to pro residues. Pyrrolidone carboxylic acid is present on Gln-86. Residue Lys-90 is modified to Allysine. A compositionally biased stretch (low complexity) spans 95–146 (GPGPMGLMGPRGPPGAVGAPGPQGFQGPAGEPGEPGQTGPAGSRGPAGPPGK). Residues 147–161 (AGEDGHPGKPGRPGE) are compositionally biased toward basic and acidic residues. Lys-183 is subject to 5-hydroxylysine; alternate. A glycan (O-linked (Gal...) hydroxylysine; alternate) is linked at Lys-183. 7 stretches are compositionally biased toward low complexity: residues 231 to 260 (VGAP…SAGP), 285 to 299 (AGPR…LSGP), 306 to 327 (PGAN…AGAP), 336 to 348 (PGPV…TGPR), 390 to 416 (PGEP…LPGA), 476 to 495 (LPGI…RGEA), and 519 to 537 (PGLA…NGAQ). Over residues 544-553 (GVQGGKGEQG) the composition is skewed to gly residues. Positions 600–639 (PGESGAAGPSGPIGIRGPSGAPGPDGNKGEAGAVGAPGSA) are enriched in low complexity. Residues 640-649 (GASGPGGLPG) are compositionally biased toward gly residues. 2 stretches are compositionally biased toward low complexity: residues 674–716 (NPGR…PRGS) and 725–743 (PAGP…QPGA). Residues 744–753 (KGEKGTKGPK) are compositionally biased toward basic and acidic residues. The span at 755-771 (ENGIVGPTGPVGAAGPS) shows a compositional bias: low complexity. The span at 781–790 (GSRGDGGPPG) shows a compositional bias: gly residues. The Cell attachment site motif lies at 783 to 785 (RGD). Residues 792-801 (TGFPGAAGRT) are compositionally biased toward low complexity. The short motif at 828–830 (RGD) is the Cell attachment site element. Low complexity-rich tracts occupy residues 855–882 (SGEP…LGLP), 891–927 (PGIA…NGAP), 957–978 (PGNI…VGPA), and 987–1007 (PGPA…PSGP). The Cell attachment site signature appears at 1011–1013 (RGD). Residues 1011–1022 (RGDKGEPGDKGA) show a composition bias toward basic and acidic residues. The segment covering 1095–1107 (AGPPGPPGPPGPP) has biased composition (pro residues). Positions 1108 to 1120 (GVSGGGYDFGFEG) are enriched in gly residues. A propeptide spans 1126-1372 (DQPRSQPSLR…RVEVGPVCFK (247 aa)) (C-terminal propeptide). Residues 1139 to 1372 (YEVDATLKSL…RVEVGPVCFK (234 aa)) form the Fibrillar collagen NC1 domain. 3 cysteine pairs are disulfide-bonded: Cys-1169/Cys-1201, Cys-1209/Cys-1370, and Cys-1278/Cys-1323. Positions 1187, 1189, 1190, 1192, and 1195 each coordinate Ca(2+). N-linked (GlcNAc...) asparagine glycosylation occurs at Asn-1273.

Belongs to the fibrillar collagen family. As to quaternary structure, trimers of one alpha 2(I) and two alpha 1(I) chains. Interacts (via C-terminus) with TMEM131 (via PapD-L domain); the interaction is direct and is involved in assembly and TRAPPIII ER-to-Golgi transport complex-dependent secretion of collagen. Proline residues at the third position of the tripeptide repeating unit (G-X-P) are hydroxylated in some or all of the chains. Proline residues at the second position of the tripeptide repeating unit (G-P-X) are hydroxylated in some of the chains. Forms the fibrils of tendon, ligaments and bones. In bones the fibrils are mineralized with calcium hydroxyapatite. Expressed in flagella of epididymal sperm.

The protein localises to the secreted. It is found in the extracellular space. It localises to the extracellular matrix. Functionally, type I collagen is a member of group I collagen (fibrillar forming collagen). The polypeptide is Collagen alpha-2(I) chain (Col1a2) (Rattus norvegicus (Rat)).